The primary structure comprises 287 residues: ATP synthase subunit a (287 aa).

Transmembrane regions (helical) follow at residues 37-57 (LDSV…MWLA), 96-116 (FIAP…AMDL), 144-164 (DLST…VYSI), 187-207 (PVFA…EYVA), 224-244 (ELVF…LSGV), and 266-286 (TLQA…AHEA).

The protein belongs to the ATPase A chain family. F-type ATPases have 2 components, CF(1) - the catalytic core - and CF(0) - the membrane proton channel. CF(1) has five subunits: alpha(3), beta(3), gamma(1), delta(1), epsilon(1). CF(0) has three main subunits: a(1), b(2) and c(9-12). The alpha and beta chains form an alternating ring which encloses part of the gamma chain. CF(1) is attached to CF(0) by a central stalk formed by the gamma and epsilon chains, while a peripheral stalk is formed by the delta and b chains.

It is found in the cell inner membrane. Its function is as follows. Key component of the proton channel; it plays a direct role in the translocation of protons across the membrane. This Acidovorax ebreus (strain TPSY) (Diaphorobacter sp. (strain TPSY)) protein is ATP synthase subunit a.